Consider the following 431-residue polypeptide: Fumarylacetoacetase fahA (431 aa).

Asp-133 provides a ligand contact to Ca(2+). Substrate is bound at residue Tyr-135. The Proton acceptor role is filled by His-140. Position 149 (Arg-149) interacts with substrate. Residues Glu-209, Glu-211, and Asp-243 each contribute to the Ca(2+) site. A Mg(2+)-binding site is contributed by Asp-243. Gln-250 and Tyr-254 together coordinate substrate. 2 residues coordinate Mg(2+): Lys-263 and Thr-267. Substrate is bound at residue Thr-362. Polar residues predominate over residues 362 to 381 (TISGKENQTQGSLLEQTNGK). The disordered stretch occupies residues 362–382 (TISGKENQTQGSLLEQTNGKN).

Belongs to the FAH family. It depends on Ca(2+) as a cofactor. The cofactor is Mg(2+).

The enzyme catalyses 4-fumarylacetoacetate + H2O = acetoacetate + fumarate + H(+). It participates in amino-acid degradation; L-phenylalanine degradation; acetoacetate and fumarate from L-phenylalanine: step 6/6. Fumarylacetoacetase; part of the L-tyrosine degradation gene cluster that mediates the biosynthesis of the brownish pigment pyomelanin as an alternative melanin. The 4-hydroxyphenylpyruvate dioxygenase hppD catalyzes the conversion of 4-hydroxyphenylpyruvate to homogentisic acid (HGA). The protein hmgX is crucial for this conversion and thus, probably functions as an accessory factor to mediate specific activity of hppD. The homogentisate 1,2-dioxygenase hmgA is then involved in the cleavage of the aromatic ring of HGA and its conversion to 4-maleylacetoacetate. When hmgA activity is lowered by the cell wall integrity (CWI) signaling pathway, HGA accumulates and leads to the production of pyomelanin through benzoquinone acetic acid after oxidation and polymerization. On the opposite, in non-stress conditions, both hppD and hmgA activities are balanced and HGA is degraded into 4-maleylacetoacetate. 4-maleylacetoacetate is further converted to 4-fumarylacetoacetate by the maleylacetoacetate isomerase maiA, which is degraded into fumarate and acetoacetate by the fumarylacetoacetase fahA. The sequence is that of Fumarylacetoacetase fahA from Aspergillus fumigatus (strain ATCC MYA-4609 / CBS 101355 / FGSC A1100 / Af293) (Neosartorya fumigata).